The chain runs to 118 residues: Beta-2-microglobulin (118 aa).

An N-terminal signal peptide occupies residues 1 to 20 (MAVSAALVLLGLLSLSGLDA). The 88-residue stretch at 25-112 (PEVQVYSRHP…HVTLTQPKIV (88 aa)) folds into the Ig-like C1-type domain. Cysteine 45 and cysteine 99 are oxidised to a cystine.

This sequence belongs to the beta-2-microglobulin family. As to quaternary structure, heterodimer of an alpha chain and a beta chain. Beta-2-microglobulin is the beta-chain of major histocompatibility complex class I molecules.

It localises to the secreted. Component of the class I major histocompatibility complex (MHC). Involved in the presentation of peptide antigens to the immune system. The chain is Beta-2-microglobulin (B2M) from Ovis aries (Sheep).